We begin with the raw amino-acid sequence, 388 residues long: Putrescine N-methyltransferase 1 (388 aa).

Composition is skewed to polar residues over residues 1–14, 23–39, and 46–88; these read MEVI…STIF, GYQN…QNGT, and HQNG…GNEL. Residues 1-88 are disordered; sequence MEVISTNTNG…TISHDNGNEL (88 aa). The PABS domain maps to 99–336; the sequence is PGWFSEFSAL…GVIGYMLCST (238 aa). S-adenosyl-L-methionine contacts are provided by residues glutamine 130, glutamate 205, and 236–237; that span reads DG. Aspartate 255 serves as the catalytic Proton acceptor. S-adenosyl-L-methionine is bound at residue tyrosine 324.

This sequence belongs to the class I-like SAM-binding methyltransferase superfamily. Spermidine/spermine synthase family. In terms of tissue distribution, mainly expressed in roots.

The enzyme catalyses putrescine + S-adenosyl-L-methionine = N-methylputrescine + S-adenosyl-L-homocysteine + H(+). The protein operates within alkaloid biosynthesis; nicotine biosynthesis. In terms of biological role, involved in the biosynthesis of pyridine alkaloid natural products, leading mainly to the production of anabasine, anatabine, nicotine and nornicotine, effective deterrents against herbivores with antiparasitic and pesticide properties (neurotoxins); nornicotine serves as the precursor in the synthesis of the carcinogen compound N'-nitrosonornicotine (NNN). Methyltransferase that mediates the conversion of putrescine to N-methylputrescine. This chain is Putrescine N-methyltransferase 1, found in Nicotiana attenuata (Coyote tobacco).